Reading from the N-terminus, the 326-residue chain is Nucleoporin Nup37 (326 aa).

WD repeat units lie at residues 6-54, 61-109, 115-154, 159-195, 199-237, 242-282, and 287-324; these read SRNA…FQEE, IQYK…LFTS, NEYKVLEGHTDFINGLVFDPKEGQEIASVSDDHTCRIWNL, TAHFVLHSPGMSVCWHPEETFKLMVAEKNGTIRFYDL, QAILSLESEQVPLMSAHWCLKNTFKVGAVAGNDWLIWDI, YPQN…QFQI, and HPQPILMGSVAVGSGLSWHRTLPLCVIGGDHKLLFWVT.

As to quaternary structure, component of the Nup107-160 subcomplex of the nuclear pore complex (NPC). The Nup107-160 subcomplex includes NUP160, NUP133, NUP107, NUP98, NUP85, NUP43, NUP37, SEH1 and SEC13.

It is found in the chromosome. The protein localises to the centromere. It localises to the kinetochore. Its subcellular location is the nucleus. The protein resides in the nuclear pore complex. Component of the Nup107-160 subcomplex of the nuclear pore complex (NPC). The Nup107-160 subcomplex is required for the assembly of a functional NPC. The Nup107-160 subcomplex is also required for normal kinetochore microtubule attachment, mitotic progression and chromosome segregation. This Homo sapiens (Human) protein is Nucleoporin Nup37 (NUP37).